A 203-amino-acid polypeptide reads, in one-letter code: Cytochrome c biogenesis ATP-binding export protein CcmA (203 aa).

In terms of domain architecture, ABC transporter spans 2-203 (LEALDLAGVR…KTSQTVRMGA (202 aa)). 34–41 (GENGSGKT) contributes to the ATP binding site.

The protein belongs to the ABC transporter superfamily. CcmA exporter (TC 3.A.1.107) family. As to quaternary structure, the complex is composed of two ATP-binding proteins (CcmA) and two transmembrane proteins (CcmB).

Its subcellular location is the cell inner membrane. The enzyme catalyses heme b(in) + ATP + H2O = heme b(out) + ADP + phosphate + H(+). In terms of biological role, part of the ABC transporter complex CcmAB involved in the biogenesis of c-type cytochromes; once thought to export heme, this seems not to be the case, but its exact role is uncertain. Responsible for energy coupling to the transport system. The chain is Cytochrome c biogenesis ATP-binding export protein CcmA from Pseudomonas aeruginosa.